Reading from the N-terminus, the 509-residue chain is ATP synthase subunit beta (509 aa).

Position 167–174 (167–174) interacts with ATP; that stretch reads GGAGVGKT. The disordered stretch occupies residues 476 to 509; that stretch reads ESLGAKMEDTSGDGAPAQSDSKSDSKGDDADKDA. A compositionally biased stretch (basic and acidic residues) spans 496–509; that stretch reads SKSDSKGDDADKDA.

This sequence belongs to the ATPase alpha/beta chains family. In terms of assembly, F-type ATPases have 2 components, CF(1) - the catalytic core - and CF(0) - the membrane proton channel. CF(1) has five subunits: alpha(3), beta(3), gamma(1), delta(1), epsilon(1). CF(0) has three main subunits: a(1), b(2) and c(9-12). The alpha and beta chains form an alternating ring which encloses part of the gamma chain. CF(1) is attached to CF(0) by a central stalk formed by the gamma and epsilon chains, while a peripheral stalk is formed by the delta and b chains.

It is found in the cell membrane. The catalysed reaction is ATP + H2O + 4 H(+)(in) = ADP + phosphate + 5 H(+)(out). Produces ATP from ADP in the presence of a proton gradient across the membrane. The catalytic sites are hosted primarily by the beta subunits. In Mycobacterium sp. (strain KMS), this protein is ATP synthase subunit beta.